The chain runs to 92 residues: Bombyxin A-4 (92 aa).

A signal peptide spans 1–19 (MKILLAIALMLSTVMWVST). Position 20 is a pyrrolidone carboxylic acid (glutamine 20). 3 disulfides stabilise this stretch: cysteine 29–cysteine 79, cysteine 41–cysteine 92, and cysteine 78–cysteine 83. The propeptide at 50-70 (SGAQFASYGSAWLMPYSEGRG) is c peptide like.

The protein belongs to the insulin family. In terms of assembly, heterodimer of a B chain and an A chain linked by two disulfide bonds.

It localises to the secreted. Brain peptide responsible for activation of prothoracic glands to produce ecdysone in insects. In Bombyx mori (Silk moth), this protein is Bombyxin A-4 (BBXA4).